Consider the following 157-residue polypeptide: Phosphopantetheine adenylyltransferase (157 aa).

S9 serves as a coordination point for substrate. ATP is bound by residues 9–10 and H17; that span reads SF. Positions 41, 73, and 87 each coordinate substrate. Residues 88–90, E98, and 122–128 each bind ATP; these read GIR and YQDISSS.

This sequence belongs to the bacterial CoaD family. Homohexamer. Mg(2+) serves as cofactor.

The protein resides in the cytoplasm. The enzyme catalyses (R)-4'-phosphopantetheine + ATP + H(+) = 3'-dephospho-CoA + diphosphate. Its pathway is cofactor biosynthesis; coenzyme A biosynthesis; CoA from (R)-pantothenate: step 4/5. Its function is as follows. Reversibly transfers an adenylyl group from ATP to 4'-phosphopantetheine, yielding dephospho-CoA (dPCoA) and pyrophosphate. The polypeptide is Phosphopantetheine adenylyltransferase (Oenococcus oeni (strain ATCC BAA-331 / PSU-1)).